A 263-amino-acid chain; its full sequence is Izumo sperm-egg fusion protein 3 (263 aa).

The first 22 residues, 1 to 22 (MGDLWVLLFSSLSLAAFHGVRG), serve as a signal peptide directing secretion. At 23–176 (CLECDPKFTE…EDPKTAENRE (154 aa)) the chain is on the extracellular side. N-linked (GlcNAc...) asparagine glycosylation is found at asparagine 98 and asparagine 128. Residues 177–197 (ISLYLIFIAEAVILASAVLLF) traverse the membrane as a helical segment. Over 198–263 (HVCISHRRKM…CAESEMQTGT (66 aa)) the chain is Cytoplasmic. A disordered region spans residues 241–263 (GRSNSNSLTGEPTCAESEMQTGT).

Belongs to the Izumo family. Monomer and homodimer. Sperm-specific (at protein level).

It is found in the cell membrane. It localises to the cytoplasmic vesicle. The protein localises to the secretory vesicle. The protein resides in the acrosome inner membrane. Plays an important role in the biogenesis of the acrosome during sperm development. This Mus musculus (Mouse) protein is Izumo sperm-egg fusion protein 3 (Izumo3).